Here is a 942-residue protein sequence, read N- to C-terminus: VPS35 endosomal protein sorting factor-like (942 aa).

This sequence belongs to the VPS35L family. Component of the heterotrimeric retriever complex.

Its subcellular location is the endosome. In terms of biological role, acts as a component of the retriever complex. The retriever complex is a heterotrimeric complex related to retromer cargo-selective complex (CSC) and essential for retromer-independent retrieval and recycling of numerous cargos. In Drosophila melanogaster (Fruit fly), this protein is VPS35 endosomal protein sorting factor-like.